Reading from the N-terminus, the 357-residue chain is UDP-3-O-acylglucosamine N-acyltransferase (357 aa).

His258 acts as the Proton acceptor in catalysis.

This sequence belongs to the transferase hexapeptide repeat family. LpxD subfamily. In terms of assembly, homotrimer.

The enzyme catalyses a UDP-3-O-[(3R)-3-hydroxyacyl]-alpha-D-glucosamine + a (3R)-hydroxyacyl-[ACP] = a UDP-2-N,3-O-bis[(3R)-3-hydroxyacyl]-alpha-D-glucosamine + holo-[ACP] + H(+). The protein operates within bacterial outer membrane biogenesis; LPS lipid A biosynthesis. Its function is as follows. Catalyzes the N-acylation of UDP-3-O-acylglucosamine using 3-hydroxyacyl-ACP as the acyl donor. Is involved in the biosynthesis of lipid A, a phosphorylated glycolipid that anchors the lipopolysaccharide to the outer membrane of the cell. This chain is UDP-3-O-acylglucosamine N-acyltransferase, found in Azorhizobium caulinodans (strain ATCC 43989 / DSM 5975 / JCM 20966 / LMG 6465 / NBRC 14845 / NCIMB 13405 / ORS 571).